The sequence spans 422 residues: Cotranscriptional regulator ARB2A homolog (422 aa).

The first 19 residues, 1-19, serve as a signal peptide directing secretion; sequence MKLEIKCFIICKVLPLVWL. Residues 213–253 are disordered; that stretch reads KSKVPADQPSPDSSDEPAEKRERRERNPKETKKRRDFYEKY. The span at 229-242 shows a compositional bias: basic and acidic residues; sequence PAEKRERRERNPKE. Serine 299 acts as the Nucleophile in catalysis. The disordered stretch occupies residues 403-422; sequence NTKTKPTPTRRSNRIKHEDL.

Belongs to the ARB2A family.

It localises to the nucleus. Its subcellular location is the cytoplasm. Functionally, may play role in the regulation of alternative splicing. May have hydrolase activity. The polypeptide is Cotranscriptional regulator ARB2A homolog (arb2a) (Xenopus tropicalis (Western clawed frog)).